We begin with the raw amino-acid sequence, 172 residues long: S-ribosylhomocysteine lyase (172 aa).

The Fe cation site is built by His54, His58, and Cys128.

Belongs to the LuxS family. In terms of assembly, homodimer. Fe cation is required as a cofactor.

The enzyme catalyses S-(5-deoxy-D-ribos-5-yl)-L-homocysteine = (S)-4,5-dihydroxypentane-2,3-dione + L-homocysteine. Involved in the synthesis of autoinducer 2 (AI-2) which is secreted by bacteria and is used to communicate both the cell density and the metabolic potential of the environment. The regulation of gene expression in response to changes in cell density is called quorum sensing. Catalyzes the transformation of S-ribosylhomocysteine (RHC) to homocysteine (HC) and 4,5-dihydroxy-2,3-pentadione (DPD). This chain is S-ribosylhomocysteine lyase, found in Photobacterium profundum (strain SS9).